Consider the following 218-residue polypeptide: Peptide methionine sulfoxide reductase MsrA (218 aa).

Positions 1-28 (MSFLDSYRKKTQMPSTDEALPGRAQPIP) are disordered. C57 is a catalytic residue.

This sequence belongs to the MsrA Met sulfoxide reductase family.

It carries out the reaction L-methionyl-[protein] + [thioredoxin]-disulfide + H2O = L-methionyl-(S)-S-oxide-[protein] + [thioredoxin]-dithiol. The enzyme catalyses [thioredoxin]-disulfide + L-methionine + H2O = L-methionine (S)-S-oxide + [thioredoxin]-dithiol. Functionally, has an important function as a repair enzyme for proteins that have been inactivated by oxidation. Catalyzes the reversible oxidation-reduction of methionine sulfoxide in proteins to methionine. This chain is Peptide methionine sulfoxide reductase MsrA, found in Brucella anthropi (strain ATCC 49188 / DSM 6882 / CCUG 24695 / JCM 21032 / LMG 3331 / NBRC 15819 / NCTC 12168 / Alc 37) (Ochrobactrum anthropi).